Here is a 204-residue protein sequence, read N- to C-terminus: IMPACT family member YigZ (204 aa).

This sequence belongs to the IMPACT family. In terms of assembly, monomer.

This Escherichia coli (strain K12) protein is IMPACT family member YigZ (yigZ).